The primary structure comprises 322 residues: Formimidoylglutamase (322 aa).

Residues His-130, Asp-156, His-158, Asp-160, Cys-244, and Asp-246 each coordinate Mn(2+).

The protein belongs to the arginase family. The cofactor is Mn(2+).

The catalysed reaction is N-formimidoyl-L-glutamate + H2O = formamide + L-glutamate. The protein operates within amino-acid degradation; L-histidine degradation into L-glutamate; L-glutamate from N-formimidoyl-L-glutamate (hydrolase route): step 1/1. Its function is as follows. Catalyzes the conversion of N-formimidoyl-L-glutamate to L-glutamate and formamide. This is Formimidoylglutamase from Geobacillus thermodenitrificans (strain NG80-2).